The sequence spans 200 residues: Recombination protein RecR (200 aa).

A C4-type zinc finger spans residues 58-75 (CSNCFCLKISQTSPCNFC). The region spanning 82 to 177 (SSLCIVATPK…KISRLALGMP (96 aa)) is the Toprim domain.

It belongs to the RecR family.

May play a role in DNA repair. It seems to be involved in an RecBC-independent recombinational process of DNA repair. It may act with RecF and RecO. In Chlamydia trachomatis serovar D (strain ATCC VR-885 / DSM 19411 / UW-3/Cx), this protein is Recombination protein RecR.